The sequence spans 141 residues: D-aminoacyl-tRNA deacylase (141 aa).

Residues 133–134 carry the Gly-cisPro motif, important for rejection of L-amino acids motif; sequence GP.

The protein belongs to the DTD family. Homodimer.

Its subcellular location is the cytoplasm. It catalyses the reaction glycyl-tRNA(Ala) + H2O = tRNA(Ala) + glycine + H(+). It carries out the reaction a D-aminoacyl-tRNA + H2O = a tRNA + a D-alpha-amino acid + H(+). In terms of biological role, an aminoacyl-tRNA editing enzyme that deacylates mischarged D-aminoacyl-tRNAs. Also deacylates mischarged glycyl-tRNA(Ala), protecting cells against glycine mischarging by AlaRS. Acts via tRNA-based rather than protein-based catalysis; rejects L-amino acids rather than detecting D-amino acids in the active site. By recycling D-aminoacyl-tRNA to D-amino acids and free tRNA molecules, this enzyme counteracts the toxicity associated with the formation of D-aminoacyl-tRNA entities in vivo and helps enforce protein L-homochirality. This chain is D-aminoacyl-tRNA deacylase, found in Thermobifida fusca (strain YX).